Here is a 257-residue protein sequence, read N- to C-terminus: NAD-capped RNA hydrolase NudC (257 aa).

R69 is a substrate binding site. The Zn(2+) site is built by C98 and C101. Residue E111 coordinates substrate. Zn(2+) contacts are provided by C116 and C119. Y124 is a binding site for substrate. In terms of domain architecture, Nudix hydrolase spans 125-248; it reads PQIAPCIIVA…TVARRLIEDT (124 aa). The a divalent metal cation site is built by A158, E174, and E178. The short motif at 159–180 is the Nudix box element; sequence GFVEVGETLEQAAAREIFEESR. 192–199 provides a ligand contact to substrate; sequence QPWPFPHS. E219 is a binding site for a divalent metal cation. A241 contributes to the substrate binding site.

Belongs to the Nudix hydrolase family. NudC subfamily. In terms of assembly, homodimer. Mg(2+) serves as cofactor. The cofactor is Mn(2+). Zn(2+) is required as a cofactor.

The catalysed reaction is a 5'-end NAD(+)-phospho-ribonucleoside in mRNA + H2O = a 5'-end phospho-adenosine-phospho-ribonucleoside in mRNA + beta-nicotinamide D-ribonucleotide + 2 H(+). The enzyme catalyses NAD(+) + H2O = beta-nicotinamide D-ribonucleotide + AMP + 2 H(+). It catalyses the reaction NADH + H2O = reduced beta-nicotinamide D-ribonucleotide + AMP + 2 H(+). In terms of biological role, mRNA decapping enzyme that specifically removes the nicotinamide adenine dinucleotide (NAD) cap from a subset of mRNAs by hydrolyzing the diphosphate linkage to produce nicotinamide mononucleotide (NMN) and 5' monophosphate mRNA. The NAD-cap is present at the 5'-end of some mRNAs and stabilizes RNA against 5'-processing. Has preference for mRNAs with a 5'-end purine. Catalyzes the hydrolysis of a broad range of dinucleotide pyrophosphates. In Edwardsiella ictaluri (strain 93-146), this protein is NAD-capped RNA hydrolase NudC.